The chain runs to 128 residues: Small ribosomal subunit protein uS8c (128 aa).

Belongs to the universal ribosomal protein uS8 family. Part of the 30S ribosomal subunit.

It localises to the plastid. The protein resides in the chloroplast. One of the primary rRNA binding proteins, it binds directly to 16S rRNA central domain where it helps coordinate assembly of the platform of the 30S subunit. The protein is Small ribosomal subunit protein uS8c (rps8) of Welwitschia mirabilis (Tree tumbo).